The sequence spans 91 residues: Small ribosomal subunit protein uS19 (91 aa).

It belongs to the universal ribosomal protein uS19 family.

Its function is as follows. Protein S19 forms a complex with S13 that binds strongly to the 16S ribosomal RNA. The chain is Small ribosomal subunit protein uS19 from Bordetella pertussis (strain Tohama I / ATCC BAA-589 / NCTC 13251).